The primary structure comprises 103 residues: Large ribosomal subunit protein bL21 (103 aa).

This sequence belongs to the bacterial ribosomal protein bL21 family. In terms of assembly, part of the 50S ribosomal subunit. Contacts protein L20.

Its function is as follows. This protein binds to 23S rRNA in the presence of protein L20. This Alkaliphilus oremlandii (strain OhILAs) (Clostridium oremlandii (strain OhILAs)) protein is Large ribosomal subunit protein bL21.